Reading from the N-terminus, the 87-residue chain is Probable Fe(2+)-trafficking protein (87 aa).

Belongs to the Fe(2+)-trafficking protein family.

Its function is as follows. Could be a mediator in iron transactions between iron acquisition and iron-requiring processes, such as synthesis and/or repair of Fe-S clusters in biosynthetic enzymes. This Francisella tularensis subsp. novicida (strain U112) protein is Probable Fe(2+)-trafficking protein.